The primary structure comprises 91 residues: Thioredoxin (91 aa).

The region spanning 2-91 is the Thioredoxin domain; it reads SDSIVHVTDD…SRQSEVEATK (90 aa). An intrachain disulfide couples cysteine 33 to cysteine 36.

This sequence belongs to the thioredoxin family.

In terms of biological role, participates in various redox reactions through the reversible oxidation of its active center dithiol to a disulfide and catalyzes dithiol-disulfide exchange reactions. This is Thioredoxin (trxA) from Thiocapsa roseopersicina.